Consider the following 448-residue polypeptide: Probable ribonuclease FAU-1 (448 aa).

The tract at residues 426-448 is disordered; sequence EAPGGKICTSEGLTSALPQSSSA. The segment covering 436 to 448 has biased composition (polar residues); that stretch reads EGLTSALPQSSSA.

Belongs to the FAU-1 family.

Probable RNase involved in rRNA stability through maturation and/or degradation of precursor rRNAs. Binds to RNA in loop regions with AU-rich sequences. This is Probable ribonuclease FAU-1 from Pyrobaculum islandicum (strain DSM 4184 / JCM 9189 / GEO3).